The following is a 501-amino-acid chain: Postreplication repair E3 ubiquitin-protein ligase rad18 (501 aa).

The RING-type zinc-finger motif lies at 34–72 (CHVCKDFYDSPMLTSCNHTFCSLCIRRCLSVDSKCPLCR). The segment at 111–154 (QAILPDQAGPSSPSKRKATEMEGPKEEDPESKRPRRSTRSTRAR) is disordered. A compositionally biased stretch (basic and acidic residues) spans 127-142 (KATEMEGPKEEDPESK). A compositionally biased stretch (basic residues) spans 143–152 (RPRRSTRSTR). Residues 186–214 (LVACPICLTRMKEQQVDRHLDTSCPGSPQ) form a UBZ4-type zinc finger. Zn(2+)-binding residues include cysteine 189, cysteine 192, histidine 204, and cysteine 209. The interval 203-250 (RHLDTSCPGSPQAASKRRPIPAQTPQPSTFPSFNTRLTSQTNQKPPER) is disordered. A compositionally biased stretch (polar residues) spans 225–246 (QTPQPSTFPSFNTRLTSQTNQK). The 35-residue stretch at 256–290 (YSMLRDTALRKKLSELGLSTHGSRQLLEKRHKEWI) folds into the SAP domain. Residues 377 to 501 (IKRQTLDGNG…GMKKPNPETC (125 aa)) are disordered.

Belongs to the RAD18 family. In terms of assembly, interacts with E2 mus-8/ubc2, forming a complex with ubiquitin ligase activity.

It is found in the nucleus. It carries out the reaction S-ubiquitinyl-[E2 ubiquitin-conjugating enzyme]-L-cysteine + [acceptor protein]-L-lysine = [E2 ubiquitin-conjugating enzyme]-L-cysteine + N(6)-ubiquitinyl-[acceptor protein]-L-lysine.. It functions in the pathway protein modification; protein ubiquitination. Its function is as follows. E3 RING-finger protein, member of the UBC2/RAD6 epistasis group. Associates to the E2 ubiquitin conjugating enzyme mus-8/ubc2 to form the mus-8/ubc2-uvs-2/rad18 ubiquitin ligase complex involved in postreplicative repair (PRR) of damaged DNA. The chain is Postreplication repair E3 ubiquitin-protein ligase rad18 (uvs-2) from Neurospora crassa (strain ATCC 24698 / 74-OR23-1A / CBS 708.71 / DSM 1257 / FGSC 987).